The primary structure comprises 620 residues: KIF-binding protein (620 aa).

Coiled coils occupy residues 30 to 64 (YKSK…QDIL) and 133 to 169 (LIKS…QLQN).

The protein belongs to the KIF-binding protein family.

The protein localises to the cytoplasm. It localises to the cytoskeleton. Functionally, activator of KIF1B plus-end-directed microtubule motor activity. Required for organization of axonal microtubules, and axonal outgrowth and maintenance during peripheral and central nervous system development. The protein is KIF-binding protein (kifbp) of Dictyostelium discoideum (Social amoeba).